The primary structure comprises 755 residues: Cartilage oligomeric matrix protein (755 aa).

The signal sequence occupies residues 1–19 (MSPTACVLVLALAALRATG). The interval 21–84 (GQIPLGGDLA…PARTPGLSVR (64 aa)) is COMP N-terminal. Positions 85–124 (PVALCAPGSCFPGVVCTETATGARCGPCPPGYTGNGSHCT) constitute an EGF-like 1 domain. Disulfide bonds link Cys89–Cys100, Cys94–Cys109, Cys112–Cys123, Cys129–Cys140, Cys134–Cys149, Cys152–Cys176, Cys182–Cys195, Cys189–Cys204, Cys207–Cys219, Cys227–Cys241, Cys235–Cys251, Cys253–Cys264, Cys280–Cys285, Cys290–Cys310, Cys326–Cys346, Cys349–Cys369, Cys385–Cys405, Cys408–Cys428, Cys446–Cys466, Cys482–Cys502, and Cys518–Cys739. Residue Asn119 is glycosylated (N-linked (GlcNAc...) asparagine). One can recognise an EGF-like 2; calcium-binding domain in the interval 125–177 (DVNECNAHPCFPRVRCINTSPGFHCEACPPGFSGPTHEGVGLTFAKTNKQVCT). Residues 178 to 220 (DINECETGQHNCVPNSVCVNTRGSFQCGPCQPGFVGDQRSGCQ) form the EGF-like 3; calcium-binding domain. In terms of domain architecture, EGF-like 4 spans 223 to 265 (GQHFCPDGSPSPCHEKADCILERDGSRSCVCAVGWAGNGLLCG). TSP type-3 repeat units follow at residues 266 to 298 (RDTD…NSGQ), 299 to 334 (EDVD…NPDQ), 335 to 357 (RNSD…NDDQ), 358 to 393 (KDTD…NFDQ), 394 to 416 (SDSD…NPDQ), 417 to 454 (RDVD…NSAQ), 455 to 490 (QDSD…NPGQ), and 491 to 526 (EDND…EVTL). Positions 295 to 501 (NSGQEDVDRD…DNDRDGVGDA (207 aa)) are disordered. Composition is skewed to basic and acidic residues over residues 332–344 (PDQR…KWGD) and 350–365 (RSQK…RDGQ). At Ser394 the chain carries Phosphoserine. Composition is skewed to basic and acidic residues over residues 412–424 (DNPD…HDFV) and 456–465 (DSDHDGKGDA). Positions 525-755 (TLTDFRAFQT…DYERHRLRRA (231 aa)) are mediates cell survival and induction of the IAP family of survival proteins. The TSP C-terminal domain occupies 530–744 (RAFQTVVLDP…LRYRCNDTIP (215 aa)). Asn740 is a glycosylation site (N-linked (GlcNAc...) asparagine).

It belongs to the thrombospondin family. As to quaternary structure, pentamer; disulfide-linked. Exists in a more compact conformation in the presence of calcium and shows a more extended conformation in the absence of calcium. Interacts with ITGB3, ITGA5 and FN1. Binding to FN1 requires the presence of divalent cations (Ca(2+), Mg(2+) or Mn(2+)). The greatest amount of binding is seen in the presence of Mn(2+). Interacts with MATN1, MATN3, MATN4 and ACAN. Binds heparin, heparan sulfate and chondroitin sulfate. EDTA dimishes significantly its binding to ACAN and abolishes its binding to MATN3, MATN4 and chondroitin sulfate. Interacts with collagen I, II and IX, and interaction with these collagens is dependent on the presence of zinc ions. Interacts with ADAMTS12. Interacts with ITGA7. The cofactor is Ca(2+). In terms of processing, proteolytically cleaved by metalloproteases ADAMTS4 and ADAMTS1 with ADAMTS4 showing more potent activity.

The protein localises to the secreted. Its subcellular location is the extracellular space. It is found in the extracellular matrix. In terms of biological role, plays a role in the structural integrity of cartilage via its interaction with other extracellular matrix proteins such as the collagens and fibronectin. Can mediate the interaction of chondrocytes with the cartilage extracellular matrix through interaction with cell surface integrin receptors. Could play a role in the pathogenesis of osteoarthritis. Potent suppressor of apoptosis in both primary chondrocytes and transformed cells. Suppresses apoptosis by blocking the activation of caspase-3 and by inducing the IAP family of survival proteins (BIRC3, BIRC2, BIRC5 and XIAP). Essential for maintaining a vascular smooth muscle cells (VSMCs) contractile/differentiated phenotype under physiological and pathological stimuli. Maintains this phenotype of VSMCs by interacting with ITGA7. The sequence is that of Cartilage oligomeric matrix protein from Rattus norvegicus (Rat).